The sequence spans 222 residues: MEKLIIAVDGTSSSGKSVIFKKVARILNYQFVDTGLMYRAFTWYCLSKNIDINNQNQIIKLLDSFDYKISNDQVFVNNTNVTNKLTSSEILNAINKITIIPQIRNYMVKAQQQMVKNKGYILVGRDITSVVLPNADLKIYLDCDIEIRAKRRFEQNVENKILDKSFKQIYQDLIKRDQVDKTRKIGPLVLVSDAWYIDNSYLTIDQVVDIVVNKVHQLESQK.

ATP is bound at residue 10-18 (GTSSSGKSV).

The protein belongs to the cytidylate kinase family. Type 1 subfamily.

It localises to the cytoplasm. The enzyme catalyses CMP + ATP = CDP + ADP. It catalyses the reaction dCMP + ATP = dCDP + ADP. The sequence is that of Cytidylate kinase from Mycoplasma capricolum subsp. capricolum (strain California kid / ATCC 27343 / NCTC 10154).